Here is a 248-residue protein sequence, read N- to C-terminus: Probable septum site-determining protein MinC (248 aa).

Positions P115–M144 are disordered. Residues V118–R138 show a composition bias toward pro residues.

It belongs to the MinC family. Interacts with MinD and FtsZ.

In terms of biological role, cell division inhibitor that blocks the formation of polar Z ring septums. Rapidly oscillates between the poles of the cell to destabilize FtsZ filaments that have formed before they mature into polar Z rings. Prevents FtsZ polymerization. This chain is Probable septum site-determining protein MinC, found in Xanthomonas euvesicatoria pv. vesicatoria (strain 85-10) (Xanthomonas campestris pv. vesicatoria).